Consider the following 32-residue polypeptide: Cyclotide glopa B (32 aa).

The cyclopeptide (Gly-Asn) cross-link spans 1-32 (GGSVPCIETCVWTGCFLVPGCSCKSDKKCYLN). Disulfide bonds link C6-C21, C10-C23, and C15-C29.

Post-translationally, this is a cyclic peptide.

Its function is as follows. Probably participates in a plant defense mechanism. The sequence is that of Cyclotide glopa B from Gloeospermum pauciflorum.